The chain runs to 499 residues: MAMAEGERTECAEPPRDEPPAEGTLKRAEELKTQANDYFKAKDYENAIKFYSQAIELNPSNAIYYGNRSLAYLRTECYGYALGDATRAIELDKKYIKGYYRRAASNMALGKFRAALRDYETVVKVKPNDKDAKMKYQECSKIVKQKAFERAIAGDEHRRSVVDSLDIESMTIEDEYSGPKLEDGKVTITFMKDLMQWYKDQKKLHRKCAYQILVQVKEVLCKLSTLVETTLKETEKITVCGDTHGQFYDLLNIFELNGLPSETNPYIFNGDFVDRGSFSVEVILTLFGFKLLYPDHFHLLRGNHETDNMNQIYGFEGEVKAKYTAQMYELFSEVFEWLPLAQCINGKVLIMHGGLFSEDGVTLDDIRKIERNRQPPDSGPMCDLLWSDPQPQNGRSVSKRGVSCQFGPDVTKAFLEENQLDYIIRSHEVKAEGYEVAHGGRCVTVFSAPNYCDQMGNKASYIHLQGSDLRPQFHQFTAVPHPNVKPMAYANTLLQLGMM.

The interval 1 to 23 (MAMAEGERTECAEPPRDEPPAEG) is disordered. The residue at position 2 (Ala2) is an N-acetylalanine. TPR repeat units follow at residues 28 to 61 (AEEL…NPSN), 62 to 95 (AIYY…DKKY), and 96 to 129 (IKGY…KPND). A catalytic region spans residues 200–499 (DQKKLHRKCA…ANTLLQLGMM (300 aa)). Mg(2+) contacts are provided by Asp242, His244, and Asp271. His244 is a binding site for substrate. Residues Arg275 and 303-304 (NH) each bind substrate. Asn303 contacts Mg(2+). The active-site Proton donor/acceptor is His304. His352 serves as a coordination point for Mg(2+). Residues Arg400 and His427 each contribute to the substrate site. His427 is a Mg(2+) binding site. The segment at 495–499 (QLGMM) is required for autoinhibition.

Belongs to the PPP phosphatase family. PP-5 (PP-T) subfamily. As to quaternary structure, probably forms a complex composed of chaperones HSP90 and HSP70, co-chaperones STIP1/HOP, CDC37, PPP5C, PTGES3/p23, TSC1 and client protein TSC2. Probably forms a complex composed of chaperones HSP90 and HSP70, co-chaperones CDC37, PPP5C, TSC1 and client protein TSC2, CDK4, AKT, RAF1 and NR3C1; this complex does not contain co-chaperones STIP1/HOP and PTGES3/p23. Part of a complex with HSP90/HSP90AA1 and steroid receptors. Interacts (via TPR repeats) with HSP90AA1 (via TPR repeat-binding motif) or HSPA1A/HSPA1B; the interaction is direct and activates the phosphatase activity. Dissociates from HSPA1A/HSPA1B and HSP90AA1 in response to arachidonic acid. Interacts with CPNE1 (via VWFA domain). Interacts with CDC16, CDC27. Interacts with KLHDC10 (via the 6 Kelch repeats); inhibits the phosphatase activity on MAP3K5. Interacts with ATM and ATR; both interactions are induced by DNA damage and enhance ATM and ATR kinase activity. Interacts with RAD17; reduced by DNA damage. Interacts with nuclear receptors such as NR3C1/GCR and PPARG (activated by agonist); regulates their transactivation activities. Interacts (via TPR repeats) with S100 proteins S100A1, S100A2, S100A6, S100B and S100P; the interactions are calcium-dependent, strongly activate PPP5C phosphatase activity and compete with HSP90AA1 and MAP3K5 interactions. Interacts with SMAD2 and SMAD3 but not with SMAD1; decreases SMAD3 phosphorylation and protein levels. Interacts (via TPR repeats) with CRY1 and CRY2; the interaction with CRY2 down-regulates the phosphatase activity on CSNK1E. Interacts (via TPR repeats) with the active form of RAC1, GNA12 or GNA13; these interactions activate the phosphatase activity and translocate PPP5C to the cell membrane. Interacts with FLCN. The cofactor is Mg(2+). It depends on Mn(2+) as a cofactor. In terms of processing, activated by at least two different proteolytic cleavages producing a 56 kDa and a 50 kDa form. As to expression, predominantly found in brain and, in lower levels, in testis, but was nearly undetectable in spleen, lung, skeletal muscle, kidney and liver.

It is found in the nucleus. Its subcellular location is the cytoplasm. It localises to the cell membrane. The enzyme catalyses O-phospho-L-seryl-[protein] + H2O = L-seryl-[protein] + phosphate. It carries out the reaction O-phospho-L-threonyl-[protein] + H2O = L-threonyl-[protein] + phosphate. With respect to regulation, autoinhibited. In the autoinhibited state, the TPR domain interacts with the catalytic region and prevents substrate access to the catalytic pocket. Allosterically activated by various polyunsaturated fatty acids, free long-chain fatty-acids and long-chain fatty acyl-CoA esters, arachidonic acid being the most effective activator. HSP90A and probably RAC1, GNA12 and GNA13 can also release the autoinhibition by the TPR repeat. Activation by RAC1, GNA12 and GNA13 is synergistic with the one produced by fatty acids binding. Inhibited by okadaic acid. Its function is as follows. Serine/threonine-protein phosphatase that dephosphorylates a myriad of proteins involved in different signaling pathways including the kinases CSNK1E, ASK1/MAP3K5, PRKDC and RAF1, the nuclear receptors NR3C1, PPARG, ESR1 and ESR2, SMAD proteins and TAU/MAPT. Implicated in wide ranging cellular processes, including apoptosis, differentiation, DNA damage response, cell survival, regulation of ion channels or circadian rhythms, in response to steroid and thyroid hormones, calcium, fatty acids, TGF-beta as well as oxidative and genotoxic stresses. Participates in the control of DNA damage response mechanisms such as checkpoint activation and DNA damage repair through, for instance, the regulation ATM/ATR-signaling and dephosphorylation of PRKDC and TP53BP1. Inhibits ASK1/MAP3K5-mediated apoptosis induced by oxidative stress. Plays a positive role in adipogenesis, mainly through the dephosphorylation and activation of PPARG transactivation function. Also dephosphorylates and inhibits the anti-adipogenic effect of NR3C1. Regulates the circadian rhythms, through the dephosphorylation and activation of CSNK1E. May modulate TGF-beta signaling pathway by the regulation of SMAD3 phosphorylation and protein expression levels. Dephosphorylates and may play a role in the regulation of TAU/MAPT. Through their dephosphorylation, may play a role in the regulation of ions channels such as KCNH2. Dephosphorylate FNIP1, disrupting interaction with HSP90AA1/Hsp90. The polypeptide is Serine/threonine-protein phosphatase 5 (Ppp5c) (Rattus norvegicus (Rat)).